Here is a 106-residue protein sequence, read N- to C-terminus: Large ribosomal subunit protein eL42 (106 aa).

It belongs to the eukaryotic ribosomal protein eL42 family.

The protein localises to the cytoplasm. The sequence is that of Large ribosomal subunit protein eL42 (RPL44) from Trypanosoma brucei brucei.